The primary structure comprises 219 residues: Mitochondrial fission factor homolog A (219 aa).

The Cytoplasmic portion of the chain corresponds to 1–199 (MAEINRMQYE…ENKERVKHEM (199 aa)). A coiled-coil region spans residues 164-194 (DLALADAASLRRQIIKLNRRLLLLEEENKER). The helical; Anchor for type IV membrane protein transmembrane segment at 200-217 (TMYSIIIIFGLLNSWLWL) threads the bilayer. At 218-219 (RR) the chain is on the extracellular side.

It belongs to the Tango11 family.

It is found in the mitochondrion outer membrane. The protein resides in the peroxisome. The protein localises to the cytoplasmic vesicle. Its subcellular location is the secretory vesicle. It localises to the synaptic vesicle. Its function is as follows. Plays a role in mitochondrial and peroxisomal fission. Promotes the recruitment and association of the fission mediator dynamin-related protein 1 (DNM1L) to the mitochondrial surface. The chain is Mitochondrial fission factor homolog A (mff-a) from Xenopus laevis (African clawed frog).